Reading from the N-terminus, the 201-residue chain is LIM domain-containing protein PLIM2b (201 aa).

LIM zinc-binding domains lie at 8-68 (DKCT…LFKE) and 103-163 (DKCA…LFME). A disordered region spans residues 171 to 201 (KKKSESQEVLPEVVPEEQPAPPPPDENREDN). A compositionally biased stretch (low complexity) spans 177 to 187 (QEVLPEVVPEE).

In terms of assembly, interacts with NEK3.

In Oryza sativa subsp. japonica (Rice), this protein is LIM domain-containing protein PLIM2b.